Consider the following 192-residue polypeptide: Probable cobalt-precorrin-6B C(15)-methyltransferase (decarboxylating) (192 aa).

S-adenosyl-L-methionine contacts are provided by residues threonine 20, 44–48 (GSGTG), glutamate 68, and alanine 96.

It belongs to the methyltransferase superfamily. Archaeal-type CbiT family.

The catalysed reaction is Co-precorrin-6B + S-adenosyl-L-methionine = Co-precorrin-7 + S-adenosyl-L-homocysteine + CO2. It functions in the pathway cofactor biosynthesis; adenosylcobalamin biosynthesis; cob(II)yrinate a,c-diamide from sirohydrochlorin (anaerobic route): step 8/10. In terms of biological role, catalyzes the methylation of C-15 in cobalt-precorrin-6B followed by the decarboxylation of C-12 to form cobalt-precorrin-7. This is Probable cobalt-precorrin-6B C(15)-methyltransferase (decarboxylating) from Sulfolobus acidocaldarius (strain ATCC 33909 / DSM 639 / JCM 8929 / NBRC 15157 / NCIMB 11770).